The primary structure comprises 147 residues: Prefoldin subunit alpha 2 (147 aa).

This sequence belongs to the prefoldin subunit alpha family. In terms of assembly, heterohexamer of two alpha and four beta subunits.

Its subcellular location is the cytoplasm. Its function is as follows. Molecular chaperone capable of stabilizing a range of proteins. Seems to fulfill an ATP-independent, HSP70-like function in archaeal de novo protein folding. In Methanocaldococcus jannaschii (strain ATCC 43067 / DSM 2661 / JAL-1 / JCM 10045 / NBRC 100440) (Methanococcus jannaschii), this protein is Prefoldin subunit alpha 2 (pfdA2).